A 701-amino-acid chain; its full sequence is METKKLITATDTQYSGILLNALNDQRIQGLYCDVTVIVEDRKFRAHRNILSACSTYFHQLFSVAGQVVELNFVKADIFAEILNYIYSSKIVRVRCDMLEELIKSGKLLGVPFIAELGIPLSQVKSISGAGGKDGGTDAPSNPDHKAPEPQKSSDSPLPCTVKIKADVKTEMPVITESFSLSSDDYKDKKASGSQDHNSEKEDDDDDVIFCSEIVSSKQAPAERKEAAQTQIPPDNEQVPEVKKVTPSSQVQLTQNSLPTNQQSSKNTSSTTQKFTPPVNANISKNPTPAANGFLSPTAQKQGTPNAVQNQHSQNITSGNALPQQKPVVNFSSIKPQQISAIKPKTEVIIHGNGLSPPSSSVIPLGQQPVTPKHISFDGVQKKQVVTFTQGSPSKPGEFKIKIADVVSGSSLDSFKDSEPRRIIDGKKIITLDTASEIEGLSTGCKVYANIGEDTYDIVIPIKEDPEEGEAKLDLDGLPNRKRMKLKHDDHYELIVDGRVYYICIVCKRSYVCLTSLRRHFNVHSWEKKYPCRYCERVFPLAEYRTKHEIHHTGERRYQCLTCGSSFINYQVMASHIRSVHSLDPSGDSKLYRLNPCKTLQIRQYAYVNNSTNGTVINDGAINVPVITDGGINVPVINDGGIVYDIDPDEPQQPASEGNHANSATKPVNWDNIFIQQSNQNMFKLNTSEGGTEFEFVIPESY.

In terms of domain architecture, BTB spans 32-94 (CDVTVIVEDR…IYSSKIVRVR (63 aa)). Disordered regions lie at residues 128-158 (GAGG…SPLP) and 181-311 (SSDD…QNQH). Residues 245–258 (TPSSQVQLTQNSLP) show a composition bias toward polar residues. Over residues 259–273 (TNQQSSKNTSSTTQK) the composition is skewed to low complexity. A compositionally biased stretch (polar residues) spans 278–311 (VNANISKNPTPAANGFLSPTAQKQGTPNAVQNQH). A required for methylation dependent DNA-binding region spans residues 470–609 (AKLDLDGLPN…QIRQYAYVNN (140 aa)). 3 C2H2-type zinc fingers span residues 501-523 (YICI…FNVH), 529-551 (YPCR…EIHH), and 557-580 (YQCL…RSVH). The required for sequence specific DNA-binding stretch occupies residues 519 to 701 (HFNVHSWEKK…EFEFVIPESY (183 aa)). The tract at residues 644-664 (DIDPDEPQQPASEGNHANSAT) is disordered. Residues 652–664 (QPASEGNHANSAT) show a composition bias toward polar residues.

Self associates. Interacts with tcf7l1-A, leading to repression of tcf7l1-A target genes. Interacts with ctnnd1, and this interaction may inhibit DNA-binding. Interacts with ncor1.

Its subcellular location is the nucleus. Its function is as follows. Transcriptional regulator with bimodal DNA-binding specificity. Binds to methylated CpG dinucleotides in the consensus sequence 5'-CGCG-3' and also binds to the non-methylated consensus sequence 5'-CTGCNA-3'. May recruit the N-CoR repressor complex to promote histone deacetylation and the formation of repressive chromatin structures in target gene promoters. Contributes to the repression of target genes of the Wnt signaling pathway and to the methylation-dependent repression of zygotic transcription prior to the mid-blastula transition (MBT). Also required for gastrulation movements. The sequence is that of Transcriptional regulator Kaiso (zbtb33) from Xenopus laevis (African clawed frog).